We begin with the raw amino-acid sequence, 85 residues long: Colicin-E8 immunity protein in ColE6 (85 aa).

This sequence belongs to the colicins ColE2/ColE8/ColE9 and pyocins S1/S2 family.

This chain is Colicin-E8 immunity protein in ColE6 (imm), found in Escherichia coli.